We begin with the raw amino-acid sequence, 484 residues long: Hexokinase-1 (484 aa).

The Hexokinase domain maps to 25 to 465 (KTLQDHLDEL…SGVGAALVSA (441 aa)). Positions 79–212 (DGNEHGSYLA…CNNVRLNAIL (134 aa)) are hexokinase small subdomain. 90–95 (DLGGTN) is a binding site for ATP. Substrate contacts are provided by residues 160-161 (SY), 177-178 (TK), and 213-214 (SD). The interval 213 to 454 (SDTTGTLVAS…SKVVTIPAED (242 aa)) is hexokinase large subdomain. Threonine 237 lines the ATP pocket. Positions 240, 269, and 302 each coordinate substrate. Residues 307–308 (GC), 344–348 (TSVLS), and 419–423 (SVYNL) contribute to the ATP site.

This sequence belongs to the hexokinase family. Monomer.

It carries out the reaction a D-hexose + ATP = a D-hexose 6-phosphate + ADP + H(+). The enzyme catalyses D-mannose + ATP = D-mannose 6-phosphate + ADP + H(+). The catalysed reaction is D-fructose + ATP = D-fructose 6-phosphate + ADP + H(+). It catalyses the reaction D-glucose + ATP = D-glucose 6-phosphate + ADP + H(+). The protein operates within carbohydrate metabolism; hexose metabolism. It participates in carbohydrate degradation; glycolysis; D-glyceraldehyde 3-phosphate and glycerone phosphate from D-glucose: step 1/4. Functionally, catalyzes the phosphorylation of hexose (six-carbon sugars) to hexose 6-phosphate. Phosphorylates D-fructose, D-mannose and, to a lower extent, D-glucose. Compared to hxk2, has low affinity for D-glucose. The sequence is that of Hexokinase-1 from Schizosaccharomyces pombe (strain 972 / ATCC 24843) (Fission yeast).